The chain runs to 491 residues: MSRAYDLVVLGAGSGGLEAGWNAAVTHKKKVAVVDVQATHGPPALVALGGTCVNVGCVPKKLMVTGAQYMDLIRESGGFGWEMDRESLCPNWKTLIAAKNKVVNSINESYKSMFADTEGLSFHMGFGALQDAHTVVVRKSEDPHSDVLETLDTEYILIATGSWPTRLGVPGDEFCITSNEAFYLEDAPKRMLCVGGGYIAVEFAGIFNGYKPCGGYVDLCYRGDLILRGFDTEVRKSLTKQLGANGIRVRTNLNPTKITKNEDGSNHVHFNDGTEEDYDQVMLAIGVPRSQALQLDKAGVRTGKNGAVQVDAYSKTSVDNIYAIGDVTNRVMLTPVAINEGACVLLETVFGGKPRATDHTKVACAVFSIPPIGTCGMTEEEAAKNYETVAVYASSFTPLMHNISGSKHKEFMIRIITNESNGEVLGVHMLGDSAPEIIQSVGICMKMGAKISDFHSTIGVHPTSAEELCSMRTPAYFYESGKRVEKLSSNL.

35–52 (DVQATHGPPALVALGGTC) lines the FAD pocket. Cys52 and Cys57 form a disulfide bridge. Residue His461 is the Proton acceptor of the active site.

It belongs to the class-I pyridine nucleotide-disulfide oxidoreductase family. In terms of assembly, homodimer. The cofactor is FAD.

Its subcellular location is the cytoplasm. The enzyme catalyses trypanothione + NADP(+) = trypanothione disulfide + NADPH + H(+). Functionally, trypanothione is the parasite analog of glutathione; this enzyme is the equivalent of glutathione reductase. The chain is Trypanothione reductase (TPR) from Leishmania donovani.